Consider the following 485-residue polypeptide: Aspartyl/glutamyl-tRNA(Asn/Gln) amidotransferase subunit B (485 aa).

Belongs to the GatB/GatE family. GatB subfamily. As to quaternary structure, heterotrimer of A, B and C subunits.

It catalyses the reaction L-glutamyl-tRNA(Gln) + L-glutamine + ATP + H2O = L-glutaminyl-tRNA(Gln) + L-glutamate + ADP + phosphate + H(+). The catalysed reaction is L-aspartyl-tRNA(Asn) + L-glutamine + ATP + H2O = L-asparaginyl-tRNA(Asn) + L-glutamate + ADP + phosphate + 2 H(+). Its function is as follows. Allows the formation of correctly charged Asn-tRNA(Asn) or Gln-tRNA(Gln) through the transamidation of misacylated Asp-tRNA(Asn) or Glu-tRNA(Gln) in organisms which lack either or both of asparaginyl-tRNA or glutaminyl-tRNA synthetases. The reaction takes place in the presence of glutamine and ATP through an activated phospho-Asp-tRNA(Asn) or phospho-Glu-tRNA(Gln). This chain is Aspartyl/glutamyl-tRNA(Asn/Gln) amidotransferase subunit B, found in Anaplasma marginale (strain St. Maries).